The sequence spans 120 residues: Large ribosomal subunit protein bL12 (120 aa).

The protein belongs to the bacterial ribosomal protein bL12 family. In terms of assembly, homodimer. Part of the ribosomal stalk of the 50S ribosomal subunit. Forms a multimeric L10(L12)X complex, where L10 forms an elongated spine to which 2 to 4 L12 dimers bind in a sequential fashion. Binds GTP-bound translation factors.

In terms of biological role, forms part of the ribosomal stalk which helps the ribosome interact with GTP-bound translation factors. Is thus essential for accurate translation. This is Large ribosomal subunit protein bL12 from Listeria monocytogenes serovar 1/2a (strain ATCC BAA-679 / EGD-e).